Reading from the N-terminus, the 87-residue chain is Large ribosomal subunit protein eL31 (87 aa).

Belongs to the eukaryotic ribosomal protein eL31 family.

In Methanoculleus marisnigri (strain ATCC 35101 / DSM 1498 / JR1), this protein is Large ribosomal subunit protein eL31.